Reading from the N-terminus, the 627-residue chain is tRNA uridine 5-carboxymethylaminomethyl modification enzyme MnmG (627 aa).

Residues 16–21 (GAGHAG), Val-128, and Ser-183 each bind FAD. 277-291 (GPRYCPSIEDKIVRF) lines the NAD(+) pocket. Gln-374 is an FAD binding site.

The protein belongs to the MnmG family. As to quaternary structure, homodimer. Heterotetramer of two MnmE and two MnmG subunits. Requires FAD as cofactor.

Its subcellular location is the cytoplasm. Its function is as follows. NAD-binding protein involved in the addition of a carboxymethylaminomethyl (cmnm) group at the wobble position (U34) of certain tRNAs, forming tRNA-cmnm(5)s(2)U34. The chain is tRNA uridine 5-carboxymethylaminomethyl modification enzyme MnmG from Finegoldia magna (strain ATCC 29328 / DSM 20472 / WAL 2508) (Peptostreptococcus magnus).